We begin with the raw amino-acid sequence, 299 residues long: Regucalcin (299 aa).

E18 is a binding site for a divalent metal cation. R101, N103, and E121 together coordinate substrate. A divalent metal cation is bound by residues N154 and D204. The Proton donor/acceptor role is filled by D204.

It belongs to the SMP-30/CGR1 family. Zn(2+) is required as a cofactor. Mn(2+) serves as cofactor. The cofactor is Ca(2+). Requires Mg(2+) as cofactor.

It localises to the cytoplasm. It carries out the reaction D-glucono-1,5-lactone + H2O = D-gluconate + H(+). The protein operates within cofactor biosynthesis; L-ascorbate biosynthesis via UDP-alpha-D-glucuronate pathway; L-ascorbate from UDP-alpha-D-glucuronate: step 3/4. Gluconolactonase with low activity towards other sugar lactones, including gulonolactone and galactonolactone. Catalyzes a key step in ascorbic acid (vitamin C) biosynthesis. Can also hydrolyze diisopropyl phosphorofluoridate and phenylacetate (in vitro). Calcium-binding protein. Modulates Ca(2+) signaling, and Ca(2+)-dependent cellular processes and enzyme activities. The protein is Regucalcin of Gallus gallus (Chicken).